The following is a 209-amino-acid chain: Small ribosomal subunit protein uS4 (209 aa).

Residues 99–162 (RRLDNVVYRL…RESNKFQEMK (64 aa)) enclose the S4 RNA-binding domain.

This sequence belongs to the universal ribosomal protein uS4 family. As to quaternary structure, part of the 30S ribosomal subunit. Contacts protein S5. The interaction surface between S4 and S5 is involved in control of translational fidelity.

Its function is as follows. One of the primary rRNA binding proteins, it binds directly to 16S rRNA where it nucleates assembly of the body of the 30S subunit. In terms of biological role, with S5 and S12 plays an important role in translational accuracy. The polypeptide is Small ribosomal subunit protein uS4 (Syntrophomonas wolfei subsp. wolfei (strain DSM 2245B / Goettingen)).